The sequence spans 64 residues: Large ribosomal subunit protein bL35c (64 aa).

The protein belongs to the bacterial ribosomal protein bL35 family.

It is found in the plastid. It localises to the chloroplast. The sequence is that of Large ribosomal subunit protein bL35c from Trieres chinensis (Marine centric diatom).